A 266-amino-acid chain; its full sequence is ATP synthase subunit a (266 aa).

Helical transmembrane passes span 28–48 (SINV…LVIF), 88–108 (LIAP…MMDL), 141–161 (DVNI…FYSI), 206–226 (LFGN…LLPW), and 237–257 (AIFH…LTVV).

The protein belongs to the ATPase A chain family. As to quaternary structure, F-type ATPases have 2 components, CF(1) - the catalytic core - and CF(0) - the membrane proton channel. CF(1) has five subunits: alpha(3), beta(3), gamma(1), delta(1), epsilon(1). CF(0) has three main subunits: a(1), b(2) and c(9-12). The alpha and beta chains form an alternating ring which encloses part of the gamma chain. CF(1) is attached to CF(0) by a central stalk formed by the gamma and epsilon chains, while a peripheral stalk is formed by the delta and b chains.

Its subcellular location is the cell inner membrane. In terms of biological role, key component of the proton channel; it plays a direct role in the translocation of protons across the membrane. In Pectobacterium atrosepticum (strain SCRI 1043 / ATCC BAA-672) (Erwinia carotovora subsp. atroseptica), this protein is ATP synthase subunit a.